A 146-amino-acid chain; its full sequence is 3-hydroxyacyl-[acyl-carrier-protein] dehydratase FabZ (146 aa).

Residue His49 is part of the active site.

Belongs to the thioester dehydratase family. FabZ subfamily.

The protein resides in the cytoplasm. The enzyme catalyses a (3R)-hydroxyacyl-[ACP] = a (2E)-enoyl-[ACP] + H2O. In terms of biological role, involved in unsaturated fatty acids biosynthesis. Catalyzes the dehydration of short chain beta-hydroxyacyl-ACPs and long chain saturated and unsaturated beta-hydroxyacyl-ACPs. The protein is 3-hydroxyacyl-[acyl-carrier-protein] dehydratase FabZ of Pseudomonas syringae pv. tomato (strain ATCC BAA-871 / DC3000).